The chain runs to 410 residues: Peptidase T (410 aa).

His-79 lines the Zn(2+) pocket. The active site involves Asp-81. Residue Asp-142 participates in Zn(2+) binding. Glu-176 (proton acceptor) is an active-site residue. 3 residues coordinate Zn(2+): Glu-177, Asp-199, and His-381.

The protein belongs to the peptidase M20B family. It depends on Zn(2+) as a cofactor.

It localises to the cytoplasm. The catalysed reaction is Release of the N-terminal residue from a tripeptide.. In terms of biological role, cleaves the N-terminal amino acid of tripeptides. This Bacillus cereus (strain ATCC 10987 / NRS 248) protein is Peptidase T.